The sequence spans 295 residues: Diaminopimelate epimerase (295 aa).

Substrate-binding residues include Asn-13 and Asn-69. Residue Cys-78 is the Proton donor of the active site. Residues 79–80, Asn-173, Asn-212, and 230–231 each bind substrate; these read GN and ER. The active-site Proton acceptor is Cys-239. Position 240 to 241 (240 to 241) interacts with substrate; it reads GT.

It belongs to the diaminopimelate epimerase family. Homodimer.

It is found in the cytoplasm. The catalysed reaction is (2S,6S)-2,6-diaminopimelate = meso-2,6-diaminopimelate. It functions in the pathway amino-acid biosynthesis; L-lysine biosynthesis via DAP pathway; DL-2,6-diaminopimelate from LL-2,6-diaminopimelate: step 1/1. In terms of biological role, catalyzes the stereoinversion of LL-2,6-diaminopimelate (L,L-DAP) to meso-diaminopimelate (meso-DAP), a precursor of L-lysine. The polypeptide is Diaminopimelate epimerase (Methanococcus aeolicus (strain ATCC BAA-1280 / DSM 17508 / OCM 812 / Nankai-3)).